The following is a 350-amino-acid chain: MDDMCSILTEEELSLYNITDCEFVKPGGLGPVLGPRHLSALVFYGLVFLLGVPGNALVVWVTGFRMPRSVTSLWFLNLALADLLCCLSLPLLMVPLAMDQHWPFGPVACKLLKGLLYLIMFCSVLLLVLISLDRFLLVSWPVWCQNWRRPRKAGWVCVGVWLLALLGSIPQFVYVKEVQLSTSKSECLGLYTVASAWANTTARFLVGFVLPFITIVTCHWVVYSRARRGSGVGPGRVSEARSRRTLRVIVAVSLSFFLCWFPLHILDFLVLSTPRHSSHSANIQLAHTLALCLAYCNSCLNPLLYVCLGRGFKQNINRSLRNMFNFATEESVTRQSMFKSTSERTQEMNM.

Residues 1–37 are Extracellular-facing; the sequence is MDDMCSILTEEELSLYNITDCEFVKPGGLGPVLGPRH. Asparagine 17 carries an N-linked (GlcNAc...) asparagine glycan. The chain crosses the membrane as a helical span at residues 38 to 64; it reads LSALVFYGLVFLLGVPGNALVVWVTGF. The Cytoplasmic portion of the chain corresponds to 65 to 69; that stretch reads RMPRS. Residues 70–93 traverse the membrane as a helical segment; it reads VTSLWFLNLALADLLCCLSLPLLM. At 94 to 110 the chain is on the extracellular side; sequence VPLAMDQHWPFGPVACK. A disulfide bridge links cysteine 109 with cysteine 187. The helical transmembrane segment at 111–132 threads the bilayer; sequence LLKGLLYLIMFCSVLLLVLISL. The Cytoplasmic segment spans residues 133 to 154; that stretch reads DRFLLVSWPVWCQNWRRPRKAG. The chain crosses the membrane as a helical span at residues 155–174; the sequence is WVCVGVWLLALLGSIPQFVY. The Extracellular portion of the chain corresponds to 175-197; it reads VKEVQLSTSKSECLGLYTVASAW. Residues 198–223 traverse the membrane as a helical segment; sequence ANTTARFLVGFVLPFITIVTCHWVVY. Topologically, residues 224-247 are cytoplasmic; it reads SRARRGSGVGPGRVSEARSRRTLR. A helical membrane pass occupies residues 248–270; that stretch reads VIVAVSLSFFLCWFPLHILDFLV. Residues 271–287 lie on the Extracellular side of the membrane; that stretch reads LSTPRHSSHSANIQLAH. Residues 288-308 form a helical membrane-spanning segment; it reads TLALCLAYCNSCLNPLLYVCL. At 309-350 the chain is on the cytoplasmic side; it reads GRGFKQNINRSLRNMFNFATEESVTRQSMFKSTSERTQEMNM.

This sequence belongs to the G-protein coupled receptor 1 family. High expression in head, kidney and posterior kidney, lower levels in peripheral blood leukocytes and spleen, low expression in brain and gills, heart, intestine and very low expression in liver and muscle.

It localises to the cell membrane. In terms of biological role, receptor for the chemotactic and inflammatory peptide anaphylatoxin C5a. This receptor stimulates chemotaxis, granule enzyme release and superoxide anion production. This is C5a anaphylatoxin chemotactic receptor 1 (c5ar1) from Oncorhynchus mykiss (Rainbow trout).